The following is a 290-amino-acid chain: Protein MGF 110-9L (290 aa).

3 helical membrane passes run 1–19 (MKVI…VIQS), 128–148 (TENI…IGYI), and 163–183 (LLIF…IIMN). Asparagine 242 and asparagine 267 each carry an N-linked (GlcNAc...) asparagine; by host glycan.

It belongs to the asfivirus MGF 110 family.

It is found in the host membrane. In terms of biological role, plays a role in virus cell tropism, and may be required for efficient virus replication in macrophages. The polypeptide is Protein MGF 110-9L (Ornithodoros (relapsing fever ticks)).